The chain runs to 125 residues: CLAVATA3/ESR (CLE)-related protein ESR3 (125 aa).

The N-terminal stretch at 1 to 26 (MASRMGMVAIMSLFVYAIVVPTSVNA) is a signal peptide. The segment at 45–125 (QQQGGFIGHR…IGPPPLPDRY (81 aa)) is disordered. Hydroxyproline occurs at positions 75 and 78. O-linked (Ara...) hydroxyproline glycosylation is present at Pro-78.

Belongs to the CLV3/ESR signal peptide family. Post-translationally, the O-glycosylation (arabinosylation) of the hydroxyproline Pro-78 enhances binding affinity of the ESR3p peptide for its receptor. Seed endosperm.

The protein resides in the secreted. Its subcellular location is the extracellular space. In terms of biological role, extracellular signal peptide that regulates cell fate. The sequence is that of CLAVATA3/ESR (CLE)-related protein ESR3 from Zea mays (Maize).